We begin with the raw amino-acid sequence, 157 residues long: Cytochrome P450 monooxygenase atG (157 aa).

Cysteine 97 is a binding site for heme.

The protein belongs to the cytochrome P450 family. Heme serves as cofactor.

It participates in secondary metabolite biosynthesis. Cytochrome P450 monooxygenase; part of the gene cluster that mediates the biosynthesis of terreic acid, a quinone epoxide inhibitor of Bruton's tyrosine kinase (BTK). The first step of the pathway is the synthesis of 6-methylsalicylic acid (6-MSA) by the 6-methylsalicylic acid synthase atX. In the biosynthesis of 6-MSA, atX utilizes one acetyl-CoA and three malonyl-CoAs as its substrates and catalyzes a series of programmed reactions including Claisen condensation, reduction, aldol cyclization, and the hydrolytic cleavage that yields 6-MSA. The 6-methylsalicylate 1-monooxygenase atA then catalyzes the decarboxylative hydroxylation of 6-MSA to 3-methylcatechol. The next step is the conversion of 3-methylcatechol to 3-methyl-1,2,4-benzenetriol by cytochrome P450 monooxygenase atE, which is enhanced by cytochrome P450 monooxygenase atG. Then, the epoxidase atD catalyzes the epoxidation and hydroxyl oxidation of 3-methyl-1,2,4-benzenetriol to terremutin. Lastly, GMC oxidoreductase atC oxidizes terremutin to terreic acid. The chain is Cytochrome P450 monooxygenase atG from Aspergillus terreus (strain NIH 2624 / FGSC A1156).